Consider the following 410-residue polypeptide: Serine hydroxymethyltransferase (410 aa).

Residues Leu-119 and Gly-123–Leu-125 contribute to the (6S)-5,6,7,8-tetrahydrofolate site. Lys-228 is modified (N6-(pyridoxal phosphate)lysine). Ser-351–Phe-353 is a (6S)-5,6,7,8-tetrahydrofolate binding site.

It belongs to the SHMT family. As to quaternary structure, homodimer. The cofactor is pyridoxal 5'-phosphate.

The protein resides in the cytoplasm. It carries out the reaction (6R)-5,10-methylene-5,6,7,8-tetrahydrofolate + glycine + H2O = (6S)-5,6,7,8-tetrahydrofolate + L-serine. It participates in one-carbon metabolism; tetrahydrofolate interconversion. It functions in the pathway amino-acid biosynthesis; glycine biosynthesis; glycine from L-serine: step 1/1. Functionally, catalyzes the reversible interconversion of serine and glycine with tetrahydrofolate (THF) serving as the one-carbon carrier. This reaction serves as the major source of one-carbon groups required for the biosynthesis of purines, thymidylate, methionine, and other important biomolecules. Also exhibits THF-independent aldolase activity toward beta-hydroxyamino acids, producing glycine and aldehydes, via a retro-aldol mechanism. This chain is Serine hydroxymethyltransferase, found in Alkaliphilus oremlandii (strain OhILAs) (Clostridium oremlandii (strain OhILAs)).